The primary structure comprises 187 residues: MNLQDHFLIAMPHLEDENFQRSVVYICENNEQGSMGLVLTQATDLSIAELCAKMNFMMADEREYSDKLVLLGGPVNLEHGFILHKKTAQEFQHSYKVTDQIYLTTSADIINTFGTAQSPEKYLVTLGCARWEPNQLENEIANNDWLVVPADENILFDVNSSERWFAANQLLGIEHVNFSYQQQMEHS.

This sequence belongs to the UPF0301 (AlgH) family.

This Histophilus somni (strain 2336) (Haemophilus somnus) protein is UPF0301 protein HSM_1900.